A 466-amino-acid chain; its full sequence is Ribulose bisphosphate carboxylase large chain (466 aa).

Lysine 4 bears the N6,N6,N6-trimethyllysine mark. Substrate contacts are provided by asparagine 113 and threonine 163. Catalysis depends on lysine 165, which acts as the Proton acceptor. Lysine 167 is a substrate binding site. Mg(2+)-binding residues include lysine 191, aspartate 193, and glutamate 194. Position 191 is an N6-carboxylysine (lysine 191). Residue histidine 284 is the Proton acceptor of the active site. The substrate site is built by arginine 285, histidine 317, and serine 369.

This sequence belongs to the RuBisCO large chain family. Type I subfamily. In terms of assembly, heterohexadecamer of 8 large chains and 8 small chains; disulfide-linked. The disulfide link is formed within the large subunit homodimers. Requires Mg(2+) as cofactor. In terms of processing, the disulfide bond which can form in the large chain dimeric partners within the hexadecamer appears to be associated with oxidative stress and protein turnover.

The protein localises to the plastid. It localises to the chloroplast. It catalyses the reaction 2 (2R)-3-phosphoglycerate + 2 H(+) = D-ribulose 1,5-bisphosphate + CO2 + H2O. The enzyme catalyses D-ribulose 1,5-bisphosphate + O2 = 2-phosphoglycolate + (2R)-3-phosphoglycerate + 2 H(+). RuBisCO catalyzes two reactions: the carboxylation of D-ribulose 1,5-bisphosphate, the primary event in carbon dioxide fixation, as well as the oxidative fragmentation of the pentose substrate in the photorespiration process. Both reactions occur simultaneously and in competition at the same active site. This chain is Ribulose bisphosphate carboxylase large chain, found in Nelsonia canescens (Blue pussyleaf).